A 505-amino-acid polypeptide reads, in one-letter code: One cut domain family member 2 (505 aa).

Disordered regions lie at residues 29-94 (LGTL…GTAA), 165-190 (KFHHPHPHHHPHHHHHHHHHHQRLSG), and 275-333 (EQHL…QLEE). A compositionally biased stretch (gly residues) spans 35–56 (PVGGGSGGGGGGGGGGGGGGPG). A compositionally biased stretch (basic residues) spans 167-187 (HHPHPHHHPHHHHHHHHHHQR). The CUT DNA-binding region spans 325-411 (VATSGQLEEI…QRMSALRLAA (87 aa)). The homeobox DNA-binding region spans 427 to 486 (QKKSRLVFTDLQRRTLFAIFKENKRPSKEMQITISQQLGLELTTVSNFFMNARRRSLEKW).

The protein belongs to the CUT homeobox family.

It is found in the nucleus. Functionally, transcriptional activator. Activates the transcription of a number of liver genes such as HNF3B. This is One cut domain family member 2 (Onecut2) from Mus musculus (Mouse).